A 218-amino-acid polypeptide reads, in one-letter code: Ribonuclease HII (218 aa).

The RNase H type-2 domain maps to 12–206 (GRVAGVDEVG…VREALARSAL (195 aa)). Positions 18, 19, and 115 each coordinate a divalent metal cation.

It belongs to the RNase HII family. The cofactor is Mn(2+). It depends on Mg(2+) as a cofactor.

It is found in the cytoplasm. The catalysed reaction is Endonucleolytic cleavage to 5'-phosphomonoester.. Functionally, endonuclease that specifically degrades the RNA of RNA-DNA hybrids. This Rhodospirillum rubrum (strain ATCC 11170 / ATH 1.1.1 / DSM 467 / LMG 4362 / NCIMB 8255 / S1) protein is Ribonuclease HII.